A 106-amino-acid chain; its full sequence is CDGSH iron-sulfur domain-containing protein 1 (106 aa).

Residue Ser2 is modified to N-acetylserine. A helical; Signal-anchor for type III membrane protein membrane pass occupies residues Glu10–Tyr29. The Cytoplasmic segment spans residues Lys30–Thr106. Residue Lys40 forms a Glycyl lysine isopeptide (Lys-Gly) (interchain with G-Cter in ubiquitin) linkage. Lys53 (schiff-base intermediate with pyridoxal 5'-phosphate) is an active-site residue. Lys53 and Lys66 each carry N6-acetyllysine; alternate. Residues Lys53 and Lys66 each participate in a glycyl lysine isopeptide (Lys-Gly) (interchain with G-Cter in ubiquitin); alternate cross-link. The [2Fe-2S] cluster site is built by Cys70 and Cys72. Residues Lys76 and Lys77 each participate in a glycyl lysine isopeptide (Lys-Gly) (interchain with G-Cter in ubiquitin) cross-link. [2Fe-2S] cluster contacts are provided by Cys81 and His85. A disordered region spans residues Ser84–Thr106. A Glycyl lysine isopeptide (Lys-Gly) (interchain with G-Cter in ubiquitin) cross-link involves residue Lys87. Lys102 carries the N6-acetyllysine; alternate modification. A Glycyl lysine isopeptide (Lys-Gly) (interchain with G-Cter in ubiquitin); alternate cross-link involves residue Lys102. Glycyl lysine isopeptide (Lys-Gly) (interchain with G-Cter in ubiquitin) cross-links involve residues Lys103 and Lys104.

It belongs to the CISD protein family. As to quaternary structure, homodimer. [2Fe-2S] cluster is required as a cofactor. The cofactor is pyridoxal 5'-phosphate. Post-translationally, ubiquitinated by PRKN during mitophagy, leading to its degradation and enhancement of mitophagy. Deubiquitinated by USP30.

Its subcellular location is the mitochondrion outer membrane. It carries out the reaction L-cysteine + 2-oxoglutarate = 2-oxo-3-sulfanylpropanoate + L-glutamate. In terms of biological role, L-cysteine transaminase that catalyzes the reversible transfer of the amino group from L-cysteine to the alpha-keto acid 2-oxoglutarate to respectively form 2-oxo-3-sulfanylpropanoate and L-glutamate. The catalytic cycle occurs in the presence of pyridoxal 5'-phosphate (PLP) cofactor that facilitates transamination by initially forming an internal aldimine with the epsilon-amino group of active site Lys-55 residue on the enzyme (PLP-enzyme aldimine), subsequently displaced by formation of an external aldimine with the substrate amino group (PLP-L-cysteine aldimine). The external aldimine is further deprotonated to form a carbanion intermediate, which in the presence of 2-oxoglutarate regenerates PLP yielding final products 2-oxo-3-sulfanylpropanoate and L-glutamate. The proton transfer in carbanion intermediate is suggested to be controlled by the active site lysine residue, whereas PLP stabilizes carbanion structure through electron delocalization, also known as the electron sink effect. Plays a key role in regulating maximal capacity for electron transport and oxidative phosphorylation. May be involved in iron-sulfur cluster shuttling and/or in redox reactions. Can transfer the [2Fe-2S] cluster to an apo-acceptor protein only when in the oxidation state, likely serving as a redox sensor that regulates mitochondrial iron-sulfur cluster assembly and iron trafficking upon oxidative stress. This Bos taurus (Bovine) protein is CDGSH iron-sulfur domain-containing protein 1 (CISD1).